The sequence spans 259 residues: Adenylate kinase (259 aa).

An ATP-binding site is contributed by 52 to 57 (GAGKGT). The NMP stretch occupies residues 72 to 101 (ATGDMLRSQVAKKTDLGREAKKIMDQGGLV). AMP-binding positions include T73, R78, 99-101 (GLV), 128-131 (GFPR), and Q135. Residues 169–206 (GRLVHPASGRSYHKIFNPPKEAMKDDITGEPLVQRSDD) are LID. ATP is bound by residues R170 and 179–180 (SY). Residues R203 and R214 each contribute to the AMP site. Position 242 (Q242) interacts with ATP.

Belongs to the adenylate kinase family. AK2 subfamily. In terms of assembly, monomer.

The protein localises to the cytoplasm. It localises to the mitochondrion intermembrane space. It catalyses the reaction AMP + ATP = 2 ADP. Its function is as follows. Catalyzes the reversible transfer of the terminal phosphate group between ATP and AMP. Plays an important role in cellular energy homeostasis and in adenine nucleotide metabolism. Adenylate kinase activity is critical for regulation of the phosphate utilization and the AMP de novo biosynthesis pathways. In Emericella nidulans (strain FGSC A4 / ATCC 38163 / CBS 112.46 / NRRL 194 / M139) (Aspergillus nidulans), this protein is Adenylate kinase (adk1).